The chain runs to 211 residues: Proteasome subunit beta 2 (211 aa).

Positions 1 to 17 (MVIMGNELQLENKILKG) are cleaved as a propeptide — removed in mature form; by autocatalysis. Thr18 (nucleophile) is an active-site residue.

It belongs to the peptidase T1B family. As to quaternary structure, the 20S proteasome core is composed of 14 alpha and 14 beta subunits that assemble into four stacked heptameric rings, resulting in a barrel-shaped structure. The two inner rings, each composed of seven catalytic beta subunits, are sandwiched by two outer rings, each composed of seven alpha subunits. The catalytic chamber with the active sites is on the inside of the barrel. Has a gated structure, the ends of the cylinder being occluded by the N-termini of the alpha-subunits. Is capped at one or both ends by the proteasome regulatory ATPase, PAN.

The protein localises to the cytoplasm. The enzyme catalyses Cleavage of peptide bonds with very broad specificity.. Its activity is regulated as follows. The formation of the proteasomal ATPase PAN-20S proteasome complex, via the docking of the C-termini of PAN into the intersubunit pockets in the alpha-rings, triggers opening of the gate for substrate entry. Interconversion between the open-gate and close-gate conformations leads to a dynamic regulation of the 20S proteasome proteolysis activity. Functionally, component of the proteasome core, a large protease complex with broad specificity involved in protein degradation. The protein is Proteasome subunit beta 2 of Saccharolobus solfataricus (strain 98/2) (Sulfolobus solfataricus).